The following is a 461-amino-acid chain: Photosynthetic NDH subunit of subcomplex B 1, chloroplastic (461 aa).

Residues 1–44 constitute a chloroplast transit peptide; the sequence is MASSLPLLPKPISPFFKTPPFSTSKPLVFLNFQTRLTSRSSDVS. Residues 66-90 form a disordered region; sequence NEYGSLFADGKQDEDPRPPDNPDNP. A compositionally biased stretch (basic and acidic residues) spans 75–85; it reads GKQDEDPRPPD.

As to quaternary structure, part of the chloroplast NDH complex, composed of a mixture of chloroplast and nucleus encoded subunits. Component of the NDH subcomplex B, at least composed of PnsB1, PnsB2, PnsB3, PnsB4 and PnsB5.

It is found in the plastid. Its subcellular location is the chloroplast thylakoid membrane. Its function is as follows. NDH shuttles electrons from NAD(P)H:plastoquinone, via FMN and iron-sulfur (Fe-S) centers, to quinones in the photosynthetic chain and possibly in a chloroplast respiratory chain. The immediate electron acceptor for the enzyme in this species is believed to be plastoquinone. Couples the redox reaction to proton translocation, and thus conserves the redox energy in a proton gradient. In Arabidopsis thaliana (Mouse-ear cress), this protein is Photosynthetic NDH subunit of subcomplex B 1, chloroplastic.